Here is a 311-residue protein sequence, read N- to C-terminus: MRTGKGNQEEEDYGEEDFNSKREGPSSNTTVHSNRDSKENDKASAIRSKHSVTEQRRRSKINERFQILRELIPNSEQKRDTASFLLEVIDYVQYLQEKVQKYEGSYPGWSQEPTKLTPWRNNHWRVQSLGNHPVAINNGSGPGIPFPGKFEDNTVTSTPAIIAEPQIPIESDKARAITGISIESQPELDDKGLPPLQPILPMVQGEQANECPATSDGLGQSNDLVIEGGTISISSAYSHELLSSLTQALQNAGIDLSQAKLSVQIDLGKRANQGLTHEEPSSKNPLSYDTQGRDSSVEEESEHSHKRMKTL.

Disordered regions lie at residues 1-60 and 271-311; these read MRTG…RRSK and ANQG…MKTL. Basic and acidic residues-rich tracts occupy residues 33–44 and 51–60; these read SNRDSKENDKAS and SVTEQRRRSK. The bHLH domain occupies 45–95; it reads AIRSKHSVTEQRRRSKINERFQILRELIPNSEQKRDTASFLLEVIDYVQYL.

Homodimer. Interacts with the N-terminus of BZR2/BES1. Expressed constitutively in roots, leaves, stems, and flowers.

The protein localises to the nucleus. Its function is as follows. Positive brassinosteroid-signaling protein. The chain is Transcription factor BIM2 (BIM2) from Arabidopsis thaliana (Mouse-ear cress).